Here is a 697-residue protein sequence, read N- to C-terminus: Glycine--tRNA ligase beta subunit (697 aa).

Belongs to the class-II aminoacyl-tRNA synthetase family. Tetramer of two alpha and two beta subunits.

The protein localises to the cytoplasm. It catalyses the reaction tRNA(Gly) + glycine + ATP = glycyl-tRNA(Gly) + AMP + diphosphate. The sequence is that of Glycine--tRNA ligase beta subunit from Ralstonia nicotianae (strain ATCC BAA-1114 / GMI1000) (Ralstonia solanacearum).